The primary structure comprises 616 residues: Probable beta-hexosaminidase ARB_01353 (616 aa).

Positions methionine 1–alanine 20 are cleaved as a signal peptide. Positions lysine 96–glycine 117 are disordered. N-linked (GlcNAc...) asparagine glycosylation occurs at asparagine 333. Catalysis depends on glutamate 361, which acts as the Proton donor.

This sequence belongs to the glycosyl hydrolase 20 family.

It localises to the secreted. It carries out the reaction Hydrolysis of terminal non-reducing N-acetyl-D-hexosamine residues in N-acetyl-beta-D-hexosaminides.. Beta-hexosaminidase that shows a broad substrate specificity. This Arthroderma benhamiae (strain ATCC MYA-4681 / CBS 112371) (Trichophyton mentagrophytes) protein is Probable beta-hexosaminidase ARB_01353.